The primary structure comprises 295 residues: Probable protein phosphatase 2C 5 (295 aa).

One can recognise a PPM-type phosphatase domain in the interval 23–294 (QYAATHMQGW…DNMTCILVLF (272 aa)). 2 residues coordinate Mn(2+): aspartate 57 and glycine 58. The tract at residues 151–170 (NRDGKPFDMSKDHKPDDDQE) is disordered. Residues aspartate 237 and aspartate 285 each coordinate Mn(2+).

This sequence belongs to the PP2C family. Mg(2+) serves as cofactor. Requires Mn(2+) as cofactor.

The protein localises to the membrane. The catalysed reaction is O-phospho-L-seryl-[protein] + H2O = L-seryl-[protein] + phosphate. The enzyme catalyses O-phospho-L-threonyl-[protein] + H2O = L-threonyl-[protein] + phosphate. Functionally, enzyme with a broad specificity. This chain is Probable protein phosphatase 2C 5, found in Paramecium tetraurelia.